Consider the following 626-residue polypeptide: DNA-directed RNA polymerase subunit gamma (626 aa).

Zn(2+)-binding residues include C71, C73, C86, and C89. Positions 467, 469, and 471 each coordinate Mg(2+).

Belongs to the RNA polymerase beta' chain family. RpoC1 subfamily. As to quaternary structure, in cyanobacteria the RNAP catalytic core is composed of 2 alpha, 1 beta, 1 beta', 1 gamma and 1 omega subunit. When a sigma factor is associated with the core the holoenzyme is formed, which can initiate transcription. Mg(2+) serves as cofactor. Zn(2+) is required as a cofactor.

The catalysed reaction is RNA(n) + a ribonucleoside 5'-triphosphate = RNA(n+1) + diphosphate. DNA-dependent RNA polymerase catalyzes the transcription of DNA into RNA using the four ribonucleoside triphosphates as substrates. The polypeptide is DNA-directed RNA polymerase subunit gamma (Synechocystis sp. (strain ATCC 27184 / PCC 6803 / Kazusa)).